The primary structure comprises 384 residues: MHFHFCSKHSIKSAEKSDILKQQLIIIISNRKEVRQLSQHKNIRTASEEIQWTSRTYGAVIVLIAGLCLLCLGAFLSISLGAADIHLRTVWEAIFHYQPTKTSHQIIHDLRLPRTAAAALVGALLAVSGAIMQGMTRNPLAEPSIMGVTSGSAFAVSIAFAFFPGLSAMGLVLWSFAGAGLGASTVMGIGMFSRGGLTPVKLALAGTAVTYFFTGISTAIAIRFDVAQDISFWYAGGVAGVKWSGVQLLLIAGAVGLTLAFFIARSVTVLSLGDDLAKGLGQYTSAVKLVGMLIVVILTGAAVSIAGTIAFIGLIIPHITRFLVGVDYRWIIPCSAVLGAVLLVFADIAARLVNAPFETPVGALTSLIGVPFFFYLARRERRGL.

Helical transmembrane passes span 58 to 78 (GAVI…FLSI), 115 to 135 (TAAA…MQGM), 154 to 174 (FAVS…LVLW), 176 to 196 (FAGA…SRGG), 202 to 222 (LALA…AIAI), 243 to 263 (WSGV…AFFI), 296 to 316 (VILT…GLII), 330 to 350 (WIIP…DIAA), and 357 to 377 (FETP…FYLA).

This sequence belongs to the binding-protein-dependent transport system permease family. FecCD subfamily. As to quaternary structure, the complex is composed of an ATP-binding protein (FhuC), two transmembrane proteins (FhuB and FhuG) and a solute-binding protein (FhuD or YxeB).

The protein localises to the cell membrane. It is found in the membrane raft. Its function is as follows. Part of the ABC transporter complex FhuBGCD involved in iron(3+)-hydroxamate import. Responsible for the translocation of the substrate across the membrane. This Bacillus subtilis (strain 168) protein is Iron(3+)-hydroxamate import system permease protein FhuB (fhuB).